Reading from the N-terminus, the 620-residue chain is Eukaryotic translation initiation factor 2-alpha kinase 1 (620 aa).

Residues 1–38 (MLGGGSVDGERDTDDDAAGAVAAPPAIDFPAEVSDPKY) form a disordered region. The span at 18–28 (AGAVAAPPAID) shows a compositional bias: low complexity. The SIFI-degron motif lies at 85–104 (LHSKQVFKLLCQTFIKMGLL). The 415-residue stretch at 167-581 (FEELAILGKG…ALQLLQSELF (415 aa)) folds into the Protein kinase domain. Residues 173 to 181 (LGKGGYGRV) and K196 each bind ATP. The residue at position 283 (T283) is a Phosphothreonine. Residues 408-413 (ACPYVM) form an HRM 1 repeat. D440 serves as the catalytic Proton acceptor. A phosphothreonine; by autocatalysis mark is found at T484 and T486. T491 carries the phosphothreonine modification. An HRM 2 repeat occupies 550 to 555 (RCPVQA).

It belongs to the protein kinase superfamily. Ser/Thr protein kinase family. GCN2 subfamily. As to quaternary structure, synthesized in an inactive form that binds to the N-terminal domain of CDC37. Has to be associated with a multiprotein complex containing Hsp90, CDC37 and PPP5C for maturation and activation by autophosphorylation. The phosphatase PPP5C modulates this activation. Homodimer; homodimerizes in presence of heme, forming a disulfide-linked inactive homodimer. Interacts with DELE1; binds both to full-length DELE1 and processed form of DELE1 (S-DELE1) in response to stress, leading to activate its protein kinase activity and trigger the integrated stress response (ISR). Activated by autophosphorylation; phosphorylated predominantly on serine and threonine residues, but also on tyrosine residues. Autophosphorylation at Thr-486 is required for kinase activation. The active autophosphorylated form apparently is largely refractory to cellular heme fluctuations. In terms of processing, ubiquitinated and degraded by the SIFI complex once the mitochondrial stress has been resolved, thereby providing stress response silencing. Within the SIFI complex, UBR4 initiates ubiquitin chain that are further elongated or branched by KCMF1.

Its subcellular location is the cytoplasm. It carries out the reaction L-seryl-[protein] + ATP = O-phospho-L-seryl-[protein] + ADP + H(+). It catalyses the reaction L-threonyl-[protein] + ATP = O-phospho-L-threonyl-[protein] + ADP + H(+). With respect to regulation, in normal conditions, the protein kinase activity is inhibited; inhibition is relieved by various stress conditions. Inhibited by heme: in presence of heme, forms a disulfide-linked inactive homodimer. Heme depletion relieves inhibition and stimulates kinase activity by autophosphorylation. Inhibited by the heme metabolites biliverdin and bilirubin. Induced by oxidative stress generated by arsenite treatment. Binding of nitric oxide (NO) to the heme iron in the N-terminal heme-binding domain activates the kinase activity, while binding of carbon monoxide (CO) suppresses kinase activity. Protein kinase activity is also activated upon binding to DELE1 in response to various stress, triggering the integrated stress response (ISR): activated by full-length DELE1 in response to iron deficiency, while it is activated by the processed form of DELE1 (S-DELE1) in response to mitochondrial stress. Its function is as follows. Metabolic-stress sensing protein kinase that phosphorylates the alpha subunit of eukaryotic translation initiation factor 2 (EIF2S1/eIF-2-alpha) in response to various stress conditions. Key activator of the integrated stress response (ISR) required for adaptation to various stress, such as heme deficiency, oxidative stress, osmotic shock, mitochondrial dysfunction and heat shock. EIF2S1/eIF-2-alpha phosphorylation in response to stress converts EIF2S1/eIF-2-alpha in a global protein synthesis inhibitor, leading to a global attenuation of cap-dependent translation, while concomitantly initiating the preferential translation of ISR-specific mRNAs, such as the transcriptional activator ATF4, and hence allowing ATF4-mediated reprogramming. Acts as a key sensor of heme-deficiency: in normal conditions, binds hemin via a cysteine thiolate and histidine nitrogenous coordination, leading to inhibit the protein kinase activity. This binding occurs with moderate affinity, allowing it to sense the heme concentration within the cell: heme depletion relieves inhibition and stimulates kinase activity, activating the ISR. Thanks to this unique heme-sensing capacity, plays a crucial role to shut off protein synthesis during acute heme-deficient conditions. In red blood cells (RBCs), controls hemoglobin synthesis ensuring a coordinated regulation of the synthesis of its heme and globin moieties. It thereby plays an essential protective role for RBC survival in anemias of iron deficiency. Iron deficiency also triggers activation by full-length DELE1. Also activates the ISR in response to mitochondrial dysfunction: HRI/EIF2AK1 protein kinase activity is activated upon binding to the processed form of DELE1 (S-DELE1), thereby promoting the ATF4-mediated reprogramming. Also acts as an activator of mitophagy in response to mitochondrial damage: catalyzes phosphorylation of eIF-2-alpha (EIF2S1) following activation by S-DELE1, thereby promoting mitochondrial localization of EIF2S1, triggering PRKN-independent mitophagy. This Rattus norvegicus (Rat) protein is Eukaryotic translation initiation factor 2-alpha kinase 1.